The primary structure comprises 306 residues: Protoheme IX farnesyltransferase (306 aa).

8 consecutive transmembrane segments (helical) span residues 31-50 (VIEL…QGGW), 55-77 (LILG…NCYI), 104-124 (LVFA…ISNW), 125-145 (LAAA…TLWL), 168-188 (WAAV…IVFL), 218-235 (GRAA…ATLA), 238-258 (LLLI…LAGG), and 286-306 (ASIS…LLPF).

Belongs to the UbiA prenyltransferase family. Protoheme IX farnesyltransferase subfamily.

The protein localises to the cell membrane. It catalyses the reaction heme b + (2E,6E)-farnesyl diphosphate + H2O = Fe(II)-heme o + diphosphate. It functions in the pathway porphyrin-containing compound metabolism; heme O biosynthesis; heme O from protoheme: step 1/1. Functionally, converts heme B (protoheme IX) to heme O by substitution of the vinyl group on carbon 2 of heme B porphyrin ring with a hydroxyethyl farnesyl side group. The sequence is that of Protoheme IX farnesyltransferase from Clavibacter sepedonicus (Clavibacter michiganensis subsp. sepedonicus).